Reading from the N-terminus, the 249-residue chain is MKFDILTLFPAMFEGPLTESILKRASEKGLIEVALHNIRDWAFDKHATADDAPYGGGAGMVMKVEPIAGAIEAVKAKRPNSKVVLTTPCGRPFNHQVAEELSREEGVVIICGRYEGVDERVRTLCVDDEISLGDFVLTGGEIAAMVIVDAVSRLVPGVLGSDESAQYDSFADGLLEYPQYTRPPEFRGEKVPDILLSGNHAEIAKWRRKEQMKRTLASRPELLDGIEWSKADKKLFAEVEKADQEKVAR.

Residues Gly-112 and 132–137 each bind S-adenosyl-L-methionine; that span reads LGDFVL.

Belongs to the RNA methyltransferase TrmD family. Homodimer.

It localises to the cytoplasm. The catalysed reaction is guanosine(37) in tRNA + S-adenosyl-L-methionine = N(1)-methylguanosine(37) in tRNA + S-adenosyl-L-homocysteine + H(+). Functionally, specifically methylates guanosine-37 in various tRNAs. In Geobacter sp. (strain M21), this protein is tRNA (guanine-N(1)-)-methyltransferase.